The following is a 149-amino-acid chain: 3-hydroxyacyl-[acyl-carrier-protein] dehydratase FabZ (149 aa).

His-53 is a catalytic residue.

Belongs to the thioester dehydratase family. FabZ subfamily.

The protein localises to the cytoplasm. The enzyme catalyses a (3R)-hydroxyacyl-[ACP] = a (2E)-enoyl-[ACP] + H2O. Its function is as follows. Involved in unsaturated fatty acids biosynthesis. Catalyzes the dehydration of short chain beta-hydroxyacyl-ACPs and long chain saturated and unsaturated beta-hydroxyacyl-ACPs. This is 3-hydroxyacyl-[acyl-carrier-protein] dehydratase FabZ from Polynucleobacter asymbioticus (strain DSM 18221 / CIP 109841 / QLW-P1DMWA-1) (Polynucleobacter necessarius subsp. asymbioticus).